The chain runs to 565 residues: MWRLRLLVLAVLAAGSAEAQANSSDGFLEFSVGKFTYFVLSRRFPQEAVLRHISSNVTFLLFQIHSQYQNTTVSYTKTLLPSTSGTGNDRGLVFILRPEQTVCTWYLETEDTKPVQSVAVTLSYSERDPIPGGCNLEFDLDIDPNIYLDYNFFETTIKFAPANIGYARAAEPPPCDVSTGQESRWRLRYHVYQYFLPEGDLTEASLLQHLQRMAQVVQVMASAVKVVTLTADDKTVVSFSSLPGQGVIYNVIVWDPSLNTSAAYVPVHTYACSFDSVDGNCVPPGRVSTKVFSTLFALLGLFTCFFGHRFWKTELFFVGFIFLGFFFYILITRLTALKYEVRLVLTAVAGSIGGLLLVASWWRFGILTLCMLCVGLVLGFLVSSGTFFTPLGNLNVFHDDGVFWVTFSCIALLVPVIFLGCLRILNILACGIVGSYSVVLAINSYMFTSLSYITLNVLRRALNADFRGAFIRVPFQTNDYIILAVWGMLAVTGITLQIRRERGRPPFPPHPYKLWKQERERRVTNILDPSHHIPPLRERLYGWVARIKELFQKEQPAGERTPLLL.

The N-terminal stretch at 1 to 21 (MWRLRLLVLAVLAAGSAEAQA) is a signal peptide. Asparagine 22, asparagine 56, asparagine 70, and asparagine 259 each carry an N-linked (GlcNAc...) asparagine glycan. A run of 7 helical transmembrane segments spans residues 287–307 (VSTK…CFFG), 311–331 (WKTE…YILI), 341–361 (VRLV…VASW), 364–384 (FGIL…LVSS), 402–422 (VFWV…LGCL), 427–447 (ILAC…SYMF), and 478–498 (NDYI…TLQI).

Its subcellular location is the cell membrane. In terms of biological role, involved in the inhibition of cytokine-induced death of pancreatic beta cells. Involved in the promotion of insulin secretion from pancreatic beta cells. Is a downstream transcriptional target of p53/TP53, and acts as a pro-survival homeostatic factor that attenuates the development of cellular stress. Maintains protein homeostasis and promotes cell survival through attenuation of endoplasmic reticulum (ER) stress and the subsequent induction of unfolded protein response (UPR). This Rattus norvegicus (Rat) protein is Transmembrane 7 superfamily member 3 (Tm7sf3).